Here is a 417-residue protein sequence, read N- to C-terminus: NADH-quinone oxidoreductase subunit D (417 aa).

The protein belongs to the complex I 49 kDa subunit family. As to quaternary structure, NDH-1 is composed of 14 different subunits. Subunits NuoB, C, D, E, F, and G constitute the peripheral sector of the complex.

It is found in the cell inner membrane. The catalysed reaction is a quinone + NADH + 5 H(+)(in) = a quinol + NAD(+) + 4 H(+)(out). In terms of biological role, NDH-1 shuttles electrons from NADH, via FMN and iron-sulfur (Fe-S) centers, to quinones in the respiratory chain. The immediate electron acceptor for the enzyme in this species is believed to be ubiquinone. Couples the redox reaction to proton translocation (for every two electrons transferred, four hydrogen ions are translocated across the cytoplasmic membrane), and thus conserves the redox energy in a proton gradient. This Aromatoleum aromaticum (strain DSM 19018 / LMG 30748 / EbN1) (Azoarcus sp. (strain EbN1)) protein is NADH-quinone oxidoreductase subunit D.